The following is a 1066-amino-acid chain: Isoleucine--tRNA ligase (1066 aa).

A 'HIGH' region motif is present at residues 47–57 (PYTTGYIHLGT). Positions 594 to 598 (KMSKS) match the 'KMSKS' region motif. Lysine 597 is a binding site for ATP.

It belongs to the class-I aminoacyl-tRNA synthetase family. IleS type 2 subfamily. In terms of assembly, monomer. Requires Zn(2+) as cofactor.

It localises to the cytoplasm. The enzyme catalyses tRNA(Ile) + L-isoleucine + ATP = L-isoleucyl-tRNA(Ile) + AMP + diphosphate. Functionally, catalyzes the attachment of isoleucine to tRNA(Ile). As IleRS can inadvertently accommodate and process structurally similar amino acids such as valine, to avoid such errors it has two additional distinct tRNA(Ile)-dependent editing activities. One activity is designated as 'pretransfer' editing and involves the hydrolysis of activated Val-AMP. The other activity is designated 'posttransfer' editing and involves deacylation of mischarged Val-tRNA(Ile). The chain is Isoleucine--tRNA ligase from Methanocorpusculum labreanum (strain ATCC 43576 / DSM 4855 / Z).